We begin with the raw amino-acid sequence, 60 residues long: Cytotoxin 8 (60 aa).

4 disulfide bridges follow: cysteine 3–cysteine 21, cysteine 14–cysteine 38, cysteine 42–cysteine 53, and cysteine 54–cysteine 59.

The protein belongs to the three-finger toxin family. Short-chain subfamily. Type IA cytotoxin sub-subfamily. In terms of assembly, monomer in solution; Homodimer and oligomer in the presence of negatively charged lipids forming a pore with a size ranging between 20 and 30 Angstroms. Expressed by the venom gland.

The protein resides in the secreted. It is found in the target cell membrane. Shows cytolytic activity on many different cells by forming pore in lipid membranes. In vivo, increases heart rate or kills the animal by cardiac arrest. In addition, it binds to heparin with high affinity, interacts with Kv channel-interacting protein 1 (KCNIP1) in a calcium-independent manner, and binds to integrin alpha-V/beta-3 (ITGAV/ITGB3) with moderate affinity. This chain is Cytotoxin 8, found in Naja annulifera (Banded Egyptian cobra).